We begin with the raw amino-acid sequence, 222 residues long: Eukaryotic translation initiation factor 3 subunit K (222 aa).

The PCI domain maps to 46–208 (YDLEANLAVL…KIKTKNITEK (163 aa)).

Belongs to the eIF-3 subunit K family. As to quaternary structure, component of the eukaryotic translation initiation factor 3 (eIF-3) complex. The eIF-3 complex interacts with pix.

Its subcellular location is the cytoplasm. Its function is as follows. Component of the eukaryotic translation initiation factor 3 (eIF-3) complex, which is involved in protein synthesis of a specialized repertoire of mRNAs and, together with other initiation factors, stimulates binding of mRNA and methionyl-tRNAi to the 40S ribosome. The eIF-3 complex specifically targets and initiates translation of a subset of mRNAs involved in cell proliferation. This Drosophila persimilis (Fruit fly) protein is Eukaryotic translation initiation factor 3 subunit K.